Consider the following 484-residue polypeptide: Dolichyl-P-Man:Man5GlcNAc2-PP-dolichol alpha-1,3-mannosyltransferase l(2)not2 (484 aa).

Over 1 to 43 (MAPPKAASHRPAVRRKKSGTLVDSILDKYLNVRFFKYLLLEPA) the chain is Cytoplasmic. Residues 44 to 64 (ALPIVGLFVLLAELVINVVVI) form a helical membrane-spanning segment. Residues 65-97 (QRVPYTEIDWVAYMQECEGFLNGTTNYSLLRGD) lie on the Lumenal side of the membrane. The chain crosses the membrane as a helical span at residues 98-118 (TGPLVYPAAFVYIYSALYYVT). Residues 119–125 (SHGTNVR) are Cytoplasmic-facing. Residues 126 to 146 (LAQYIFAGIYLLQLALVLRLY) form a helical membrane-spanning segment. At 147-171 (SKSRKVPPYVLVLSAFTSYRIHSIY) the chain is on the lumenal side. The chain crosses the membrane as a helical span at residues 172-192 (VLRLFNDPVAVLLLYAALNLF). The Cytoplasmic portion of the chain corresponds to 193–211 (LDRRWTLGSTFFSLAVGVK). Residues 212–232 (MNILLFAPALLLFYLANLGLL) form a helical membrane-spanning segment. Arg233 is a topological domain (lumenal). A helical transmembrane segment spans residues 234 to 254 (TILQLAVCGVIQLLLGAPFLL). Residues 255-294 (THPVEYLRGSFDLGRIFEHKWTVNYRFLSRDVFENRTFHV) are Cytoplasmic-facing. The chain crosses the membrane as a helical span at residues 295–315 (SLLGLHLLLLLAFAKPTWTFF). Residues 316–403 (QSYVRLRRIE…YGIHFDRCTQ (88 aa)) are Lumenal-facing. Residues 404-424 (LALLPFFLCNLVGVACSRSLH) traverse the membrane as a helical segment. The Cytoplasmic portion of the chain corresponds to 425 to 426 (YQ). Residues 427–447 (FYVWYFHSLPYLAWSTPYSLG) traverse the membrane as a helical segment. The Lumenal portion of the chain corresponds to 448-484 (VRCLILGLIEYCWNTYPSTNFSSAALHFTHIIPPYQL).

It belongs to the glycosyltransferase ALG3 family.

Its subcellular location is the endoplasmic reticulum membrane. The enzyme catalyses an alpha-D-Man-(1-&gt;2)-alpha-D-Man-(1-&gt;2)-alpha-D-Man-(1-&gt;3)-[alpha-D-Man-(1-&gt;6)]-beta-D-Man-(1-&gt;4)-beta-D-GlcNAc-(1-&gt;4)-alpha-D-GlcNAc-diphospho-di-trans,poly-cis-dolichol + a di-trans,poly-cis-dolichyl beta-D-mannosyl phosphate = an alpha-D-Man-(1-&gt;2)-alpha-D-Man-(1-&gt;2)-alpha-D-Man-(1-&gt;3)-[alpha-D-Man-(1-&gt;3)-alpha-D-Man-(1-&gt;6)]-beta-D-Man-(1-&gt;4)-beta-D-GlcNAc-(1-&gt;4)-alpha-D-GlcNAc-diphospho-di-trans,poly-cis-dolichol + a di-trans,poly-cis-dolichyl phosphate + H(+). It participates in protein modification; protein glycosylation. Probable alpha-1,3-mannosyltransferase involved in the N-glycosylation pathway. Involved in glycosylation of the TNF receptor grnd, regulating its ligand affinity. Required for normal epithelial growth and architecture. Suppressor of JNK-dependent intestinal stem cell proliferation. The chain is Dolichyl-P-Man:Man5GlcNAc2-PP-dolichol alpha-1,3-mannosyltransferase l(2)not2 from Drosophila melanogaster (Fruit fly).